The following is a 789-amino-acid chain: Zinc finger FYVE domain-containing protein 1 (789 aa).

The segment at 416-788 (MAHSSFFPDE…LSVMTGKGPL (373 aa)) is required for localization in the lipid droplets. 2 FYVE-type zinc fingers span residues 598-659 (NSQI…EARN) and 715-775 (DHEI…KKPA). Positions 604, 607, 620, 623, 628, 631, 651, 654, 721, 724, 737, 740, 745, 748, 767, and 770 each coordinate Zn(2+).

In terms of assembly, interacts with RAB18 (in GTP-bound form). Interacts with BSCL2 in a RAB18-dependent manner. Interacts with ZW10.

The protein localises to the golgi apparatus. The protein resides in the golgi stack. It localises to the endoplasmic reticulum. It is found in the preautophagosomal structure. Its subcellular location is the lipid droplet. The protein localises to the mitochondrion. Plays a role in the formation of lipid droplets (LDs) which are storage organelles at the center of lipid and energy homeostasis. Regulates the morphology, size and distribution of LDs. Mediates the formation of endoplasmic reticulum-lipid droplets (ER-LD) contact sites by forming a complex with RAB18 and ZW10. Binds to phosphatidylinositol 3-phosphate (PtdIns3P) through FYVE-type zinc finger. The polypeptide is Zinc finger FYVE domain-containing protein 1 (ZFYVE1) (Pongo abelii (Sumatran orangutan)).